Consider the following 277-residue polypeptide: Thiazole synthase (277 aa).

Catalysis depends on K119, which acts as the Schiff-base intermediate with DXP. 1-deoxy-D-xylulose 5-phosphate-binding positions include G180, 206–207 (AG), and 228–229 (NT).

It belongs to the ThiG family. Homotetramer. Forms heterodimers with either ThiH or ThiS.

The protein resides in the plastid. It is found in the chloroplast. The catalysed reaction is [ThiS sulfur-carrier protein]-C-terminal-Gly-aminoethanethioate + 2-iminoacetate + 1-deoxy-D-xylulose 5-phosphate = [ThiS sulfur-carrier protein]-C-terminal Gly-Gly + 2-[(2R,5Z)-2-carboxy-4-methylthiazol-5(2H)-ylidene]ethyl phosphate + 2 H2O + H(+). The protein operates within cofactor biosynthesis; thiamine diphosphate biosynthesis. Functionally, catalyzes the rearrangement of 1-deoxy-D-xylulose 5-phosphate (DXP) to produce the thiazole phosphate moiety of thiamine. Sulfur is provided by the thiocarboxylate moiety of the carrier protein ThiS. In vitro, sulfur can be provided by H(2)S. This chain is Thiazole synthase, found in Pyropia yezoensis (Susabi-nori).